Reading from the N-terminus, the 187-residue chain is GTP cyclohydrolase 1 (187 aa).

Cys81, His84, and Cys152 together coordinate Zn(2+).

Belongs to the GTP cyclohydrolase I family. In terms of assembly, homomer.

The catalysed reaction is GTP + H2O = 7,8-dihydroneopterin 3'-triphosphate + formate + H(+). It participates in cofactor biosynthesis; 7,8-dihydroneopterin triphosphate biosynthesis; 7,8-dihydroneopterin triphosphate from GTP: step 1/1. The protein is GTP cyclohydrolase 1 of Pyrobaculum neutrophilum (strain DSM 2338 / JCM 9278 / NBRC 100436 / V24Sta) (Thermoproteus neutrophilus).